A 347-amino-acid polypeptide reads, in one-letter code: N-acetyl-gamma-glutamyl-phosphate reductase (347 aa).

Residue Cys153 is part of the active site.

It belongs to the NAGSA dehydrogenase family. Type 1 subfamily.

It localises to the cytoplasm. It carries out the reaction N-acetyl-L-glutamate 5-semialdehyde + phosphate + NADP(+) = N-acetyl-L-glutamyl 5-phosphate + NADPH + H(+). It participates in amino-acid biosynthesis; L-arginine biosynthesis; N(2)-acetyl-L-ornithine from L-glutamate: step 3/4. Its function is as follows. Catalyzes the NADPH-dependent reduction of N-acetyl-5-glutamyl phosphate to yield N-acetyl-L-glutamate 5-semialdehyde. In Mycobacterium leprae (strain Br4923), this protein is N-acetyl-gamma-glutamyl-phosphate reductase.